We begin with the raw amino-acid sequence, 472 residues long: Chromosomal replication initiator protein DnaA (472 aa).

A domain I, interacts with DnaA modulators region spans residues 1–80 (MDTKQIWFTT…YQVNVRVIIS (80 aa)). The tract at residues 80–130 (SSATPAPSEPVAVTPSEPSPTTEVAEPSFASFNQAAPMLNQLPLGDPNRSS) is domain II. The segment at 131–347 (VLNPRYTFSS…GCLNRVIAYA (217 aa)) is domain III, AAA+ region. Glycine 175, glycine 177, lysine 178, and threonine 179 together coordinate ATP. The interval 348–472 (NLNRTPVTVE…RQRLYGENAR (125 aa)) is domain IV, binds dsDNA.

The protein belongs to the DnaA family. As to quaternary structure, oligomerizes as a right-handed, spiral filament on DNA at oriC.

It localises to the cytoplasm. Plays an essential role in the initiation and regulation of chromosomal replication. ATP-DnaA binds to the origin of replication (oriC) to initiate formation of the DNA replication initiation complex once per cell cycle. Binds the DnaA box (a 9 base pair repeat at the origin) and separates the double-stranded (ds)DNA. Forms a right-handed helical filament on oriC DNA; dsDNA binds to the exterior of the filament while single-stranded (ss)DNA is stabiized in the filament's interior. The ATP-DnaA-oriC complex binds and stabilizes one strand of the AT-rich DNA unwinding element (DUE), permitting loading of DNA polymerase. After initiation quickly degrades to an ADP-DnaA complex that is not apt for DNA replication. Binds acidic phospholipids. This chain is Chromosomal replication initiator protein DnaA, found in Herpetosiphon aurantiacus (strain ATCC 23779 / DSM 785 / 114-95).